Reading from the N-terminus, the 297-residue chain is Ribonuclease H2 subunit A (297 aa).

The RNase H type-2 domain maps to 21 to 248 (PCVLGIDEAG…ASTIVEKRCV (228 aa)). 3 residues coordinate a divalent metal cation: D27, E28, and D138.

The protein belongs to the RNase HII family. Eukaryotic subfamily. Requires Mn(2+) as cofactor. Mg(2+) is required as a cofactor.

The enzyme catalyses Endonucleolytic cleavage to 5'-phosphomonoester.. In terms of biological role, catalytic subunit of RNase HII, an endonuclease that specifically degrades the RNA of RNA:DNA hybrids. Participates in DNA replication, possibly by mediating the removal of lagging-strand Okazaki fragment RNA primers during DNA replication. Mediates the excision of single ribonucleotides from DNA:RNA duplexes. The protein is Ribonuclease H2 subunit A (rnh-2) of Caenorhabditis elegans.